The sequence spans 274 residues: 2,3,4,5-tetrahydropyridine-2,6-dicarboxylate N-succinyltransferase (274 aa).

2 residues coordinate substrate: Arg-104 and Asp-141.

It belongs to the transferase hexapeptide repeat family. As to quaternary structure, homotrimer.

The protein resides in the cytoplasm. It carries out the reaction (S)-2,3,4,5-tetrahydrodipicolinate + succinyl-CoA + H2O = (S)-2-succinylamino-6-oxoheptanedioate + CoA. It functions in the pathway amino-acid biosynthesis; L-lysine biosynthesis via DAP pathway; LL-2,6-diaminopimelate from (S)-tetrahydrodipicolinate (succinylase route): step 1/3. In Escherichia coli O6:H1 (strain CFT073 / ATCC 700928 / UPEC), this protein is 2,3,4,5-tetrahydropyridine-2,6-dicarboxylate N-succinyltransferase.